The chain runs to 669 residues: Dymeclin (669 aa).

Gly-2 is lipidated: N-myristoyl glycine.

Belongs to the dymeclin family. In terms of assembly, interacts with GOLM1 and PPIB. In terms of processing, myristoylated in vitro; myristoylation is not essential for protein targeting to Golgi compartment. Expressed in most embryo-fetal and adult tissues. Abundant in primary chondrocytes, osteoblasts, cerebellum, kidney, lung, stomach, heart, pancreas and fetal brain. Very low or no expression in the spleen, thymus, esophagus, bladder and thyroid gland.

It localises to the cytoplasm. The protein resides in the golgi apparatus. The protein localises to the membrane. In terms of biological role, necessary for correct organization of Golgi apparatus. Involved in bone development. The sequence is that of Dymeclin (DYM) from Homo sapiens (Human).